The primary structure comprises 100 residues: Small ribosomal subunit protein uS14c (100 aa).

This sequence belongs to the universal ribosomal protein uS14 family. As to quaternary structure, part of the 30S ribosomal subunit.

The protein localises to the plastid. Functionally, binds 16S rRNA, required for the assembly of 30S particles. The protein is Small ribosomal subunit protein uS14c of Cuscuta obtusiflora (Peruvian dodder).